The chain runs to 112 residues: UPF0342 protein SPP_1392 (112 aa).

Belongs to the UPF0342 family.

The polypeptide is UPF0342 protein SPP_1392 (Streptococcus pneumoniae (strain P1031)).